The primary structure comprises 312 residues: Putative B3 domain-containing protein Os10g0537100 (312 aa).

A DNA-binding region (TF-B3) is located at residues 35 to 153; it reads FEKVVTPSDV…RLFIDFRRRR (119 aa). Disordered stretches follow at residues 161–182 and 286–312; these read FPPT…HPPL and LLQL…DLGL. Residues 170 to 180 are compositionally biased toward basic residues; that stretch reads HSHHHHQRHHP. Positions 286–301 are enriched in low complexity; the sequence is LLQLPSPSSSTSSSTA.

It is found in the nucleus. This is Putative B3 domain-containing protein Os10g0537100 from Oryza sativa subsp. japonica (Rice).